The following is a 270-amino-acid chain: Regulatory protein RecX (270 aa).

Belongs to the RecX family.

It localises to the cytoplasm. Its function is as follows. Modulates RecA activity. The sequence is that of Regulatory protein RecX from Bacillus cereus (strain G9842).